The following is a 469-amino-acid chain: Ufm1-specific protease 2 (469 aa).

M1 carries the post-translational modification N-acetylmethionine. Active-site residues include C302, D426, and H428.

This sequence belongs to the peptidase C78 family. In terms of tissue distribution, expressed in brain.

The protein localises to the endoplasmic reticulum. The protein resides in the cytoplasm. It is found in the nucleus. Functionally, thiol-dependent isopeptidase that specifically cleaves UFM1, a ubiquitin-like modifier protein, from conjugated proteins, such as CD274/PD-L1, CYB5R3, DDRGK1, MRE11, RPL26/uL24, TRIP4 and RPL26/uL24. While it is also able to mediate the processing of UFM1 precursors, a prerequisite for conjugation reactions, UFSP2 mainly acts as a protein deUFMylase that mediates deconjugation of UFM1 from target proteins. Mediates deUFMylation of RPL26/uL24, a critical step to release the UFM1 ribosome E3 ligase (UREL) complex during the recycling of 60S ribosome subunits from the endoplasmic reticulum. Catalyzes deUFMylation of TRIP4, regulating intracellular nuclear receptors transactivation and thereby regulate cell proliferation and differentiation. The protein is Ufm1-specific protease 2 of Homo sapiens (Human).